The following is a 399-amino-acid chain: Elongation factor Tu (399 aa).

The tr-type G domain maps to 10-204; it reads KPHVNIGTIG…AVDASIPEPE (195 aa). Positions 19 to 26 are G1; sequence GHVDHGKT. 19–26 serves as a coordination point for GTP; the sequence is GHVDHGKT. Mg(2+) is bound at residue Thr26. Residues 60 to 64 form a G2 region; it reads GITIN. The tract at residues 81 to 84 is G3; that stretch reads DCPG. GTP-binding positions include 81–85 and 136–139; these read DCPGH and NKCD. The interval 136-139 is G4; sequence NKCD. Positions 174–176 are G5; the sequence is SGL.

It belongs to the TRAFAC class translation factor GTPase superfamily. Classic translation factor GTPase family. EF-Tu/EF-1A subfamily. In terms of assembly, monomer.

The protein localises to the cytoplasm. It catalyses the reaction GTP + H2O = GDP + phosphate + H(+). GTP hydrolase that promotes the GTP-dependent binding of aminoacyl-tRNA to the A-site of ribosomes during protein biosynthesis. The polypeptide is Elongation factor Tu (Prochlorococcus marinus subsp. pastoris (strain CCMP1986 / NIES-2087 / MED4)).